A 766-amino-acid polypeptide reads, in one-letter code: FYVE, RhoGEF and PH domain-containing protein 4 (766 aa).

Disordered regions lie at residues M1–V20, N46–Q83, and E134–L188. The interval M1–N150 is actin filament-binding. Composition is skewed to polar residues over residues L58 to Q83 and D145 to R157. Residues L167–G184 are compositionally biased toward basic and acidic residues. Positions K206–A393 constitute a DH domain. Positions E422–D521 constitute a PH 1 domain. The segment at D559–S619 adopts an FYVE-type zinc-finger fold. Positions 565, 568, 582, 585, 590, 593, 611, and 614 each coordinate Zn(2+). The PH 2 domain occupies N643 to T740. S702 and S716 each carry phosphoserine. The tract at residues E742 to C766 is disordered. Over residues A752 to C766 the composition is skewed to basic and acidic residues.

Homooligomer. Expressed in different tissues, including brain, cerebellum, peripheral nerve, skeletal muscle, heart, uterus, placenta and testis.

The protein localises to the cytoplasm. It localises to the cytoskeleton. The protein resides in the cell projection. It is found in the filopodium. Functionally, activates CDC42, a member of the Ras-like family of Rho- and Rac proteins, by exchanging bound GDP for free GTP. Plays a role in regulating the actin cytoskeleton and cell shape. Activates MAPK8. This Homo sapiens (Human) protein is FYVE, RhoGEF and PH domain-containing protein 4 (FGD4).